We begin with the raw amino-acid sequence, 280 residues long: 2-dehydro-3-deoxyphosphooctonate aldolase (280 aa).

It belongs to the KdsA family.

It localises to the cytoplasm. It catalyses the reaction D-arabinose 5-phosphate + phosphoenolpyruvate + H2O = 3-deoxy-alpha-D-manno-2-octulosonate-8-phosphate + phosphate. Its pathway is carbohydrate biosynthesis; 3-deoxy-D-manno-octulosonate biosynthesis; 3-deoxy-D-manno-octulosonate from D-ribulose 5-phosphate: step 2/3. The protein operates within bacterial outer membrane biogenesis; lipopolysaccharide biosynthesis. This chain is 2-dehydro-3-deoxyphosphooctonate aldolase, found in Rhizobium meliloti (strain 1021) (Ensifer meliloti).